The sequence spans 84 residues: Large ribosomal subunit protein bL27 (84 aa).

The disordered stretch occupies residues 1-22 (MAHKKAGGSTRNGRDSESKRLG).

Belongs to the bacterial ribosomal protein bL27 family.

In Shewanella woodyi (strain ATCC 51908 / MS32), this protein is Large ribosomal subunit protein bL27.